Consider the following 200-residue polypeptide: Pyridoxine/pyridoxamine 5'-phosphate oxidase (200 aa).

Residues 49–54 (RMLLLK), 64–65 (YT), arginine 70, lysine 71, and glutamine 93 contribute to the FMN site. Lysine 54 provides a ligand contact to substrate. Substrate contacts are provided by tyrosine 111, arginine 115, and serine 119. Residues 128–129 (QS) and tryptophan 173 each bind FMN. 179–181 (RLH) provides a ligand contact to substrate. Arginine 183 contacts FMN.

This sequence belongs to the pyridoxamine 5'-phosphate oxidase family. As to quaternary structure, homodimer. FMN serves as cofactor.

The catalysed reaction is pyridoxamine 5'-phosphate + O2 + H2O = pyridoxal 5'-phosphate + H2O2 + NH4(+). It carries out the reaction pyridoxine 5'-phosphate + O2 = pyridoxal 5'-phosphate + H2O2. It functions in the pathway cofactor metabolism; pyridoxal 5'-phosphate salvage; pyridoxal 5'-phosphate from pyridoxamine 5'-phosphate: step 1/1. It participates in cofactor metabolism; pyridoxal 5'-phosphate salvage; pyridoxal 5'-phosphate from pyridoxine 5'-phosphate: step 1/1. Its function is as follows. Catalyzes the oxidation of either pyridoxine 5'-phosphate (PNP) or pyridoxamine 5'-phosphate (PMP) into pyridoxal 5'-phosphate (PLP). This Gluconobacter oxydans (strain 621H) (Gluconobacter suboxydans) protein is Pyridoxine/pyridoxamine 5'-phosphate oxidase.